Consider the following 569-residue polypeptide: CUE domain-containing protein 5 (569 aa).

The CUE domain occupies 17 to 60 (MAEKARATLKEAFPNTDDAIIRAVLAASGYKLEPAFNALLGLSD). 3 disordered regions span residues 67 to 139 (MEQA…DDYS), 175 to 275 (DGEE…SSSA), and 311 to 569 (EELE…GKET). The span at 79–100 (AAHDDPVQRQLEEDERCARELA) shows a compositional bias: basic and acidic residues. The segment covering 104-113 (NSHRPERRRK) has biased composition (basic residues). Positions 234 to 249 (SDPHMLNEKDFERLRL) are enriched in basic and acidic residues. Residues 250 to 274 (ESSSSPMMRRSSLNSNRRSVESSSS) are compositionally biased toward low complexity. The span at 329-340 (VVVEKKPDESRK) shows a compositional bias: basic and acidic residues. A compositionally biased stretch (polar residues) spans 347-364 (ETVSEEQMGSSNAKSKVL). Composition is skewed to basic and acidic residues over residues 367 to 381 (EPKDSTSVEAEKTET), 399 to 500 (ISEK…KETD), and 507 to 558 (KEEK…KIEE).

The protein resides in the cytoplasm. The polypeptide is CUE domain-containing protein 5 (Schizosaccharomyces pombe (strain 972 / ATCC 24843) (Fission yeast)).